Here is a 634-residue protein sequence, read N- to C-terminus: Chaperone protein HtpG (634 aa).

The tract at residues 1–342 (MTVETDKQTL…SSDLSLNVSR (342 aa)) is a; substrate-binding. The interval 343–559 (EILQSGPVVD…QGDLGLQMRQ (217 aa)) is b. The tract at residues 560 to 634 (LLEASGQAVP…LNKLLLELSA (75 aa)) is c.

This sequence belongs to the heat shock protein 90 family. In terms of assembly, homodimer.

The protein localises to the cytoplasm. Its function is as follows. Molecular chaperone. Has ATPase activity. In Xanthomonas axonopodis pv. citri (strain 306), this protein is Chaperone protein HtpG.